The following is a 319-amino-acid chain: Putative peptide permease protein BOV_A0351 (319 aa).

Transmembrane regions (helical) follow at residues 9 to 29 (LLIGLGMLLALTILIFVLLQL), 102 to 122 (LLLMAAGLAIAIVIGVTTGII), 138 to 158 (LALLGISSPAFLTALLGLYVF), 182 to 202 (LLRHLALPALVLSIGHAALIM), 242 to 262 (LPVVTLIGSTIGLAVGGAIFI), and 284 to 304 (YPVIMGATLVIGACVIIVNIL). One can recognise an ABC transmembrane type-1 domain in the interval 98–305 (IGPTLLLMAA…ACVIIVNILT (208 aa)).

Belongs to the binding-protein-dependent transport system permease family. In terms of assembly, the complex is composed of two ATP-binding proteins (BOV_A0347 and BOV_A0348), two transmembrane proteins (BOV_A0350 and BOV_A0351) and a solute-binding protein (BOV_A0352).

The protein resides in the cell inner membrane. Functionally, probably part of an ABC transporter complex that could be involved in peptide import. Probably responsible for the translocation of the substrate across the membrane. This is Putative peptide permease protein BOV_A0351 from Brucella ovis (strain ATCC 25840 / 63/290 / NCTC 10512).